Here is a 228-residue protein sequence, read N- to C-terminus: Aspartyl protease inhibitor (228 aa).

The first 15 residues, 1–15 (MKLIELCVLCAIAFA), serve as a signal peptide directing secretion. Positions 88-112 (KLKSRMSGKKEEKAAVTSTKDEDLP) are enriched in basic and acidic residues. Positions 88–119 (KLKSRMSGKKEEKAAVTSTKDEDLPKPPQKPS) are disordered. Residues C134 and C224 are joined by a disulfide bond.

This sequence belongs to the protease inhibitor I33 family.

The protein resides in the secreted. Aspartyl protease inhibitor. This is Aspartyl protease inhibitor from Trichostrongylus colubriformis (Black scour worm).